The primary structure comprises 357 residues: Protein-arginine kinase (357 aa).

A Phosphagen kinase C-terminal domain is found at 24-255 (IVISTRLRIA…RQIIEQERVA (232 aa)). ATP-binding positions include 27–31 (STRLR), His92, Arg126, 177–181 (RASVM), and 208–213 (RGIYGE). An RDXXRA motif of the pArg binding pocket involved in allosteric regulation motif is present at residues 338-343 (RDERRA).

It belongs to the ATP:guanido phosphotransferase family.

It carries out the reaction L-arginyl-[protein] + ATP = N(omega)-phospho-L-arginyl-[protein] + ADP + H(+). Appears to be allosterically activated by the binding of pArg-containing polypeptides to the pArg-binding pocket localized in the C-terminal domain of McsB. In terms of biological role, catalyzes the specific phosphorylation of arginine residues in proteins. The polypeptide is Protein-arginine kinase (Brevibacillus brevis (strain 47 / JCM 6285 / NBRC 100599)).